A 249-amino-acid polypeptide reads, in one-letter code: MAGHSKWANIKHRKAKQDASRGKVFTKYIREIVTAAKLGGADPASNPRLRAVVEKALSVNMTRDTINRAIQRGVGGEDNDDLKEVTYEGYGVGGVAVLVETMTDNLNRTVPDVRHCFSKTNGNLGTAGSVAYLFTKRGEITFDDISLEDKIMDVALEAGAEDIEVSEDEILVITSPETFGEVQDALAAAGLKSDNAEVVMSPSTKAEITDIDQAKQVMKLIDMLEDLDDVQNVYTNVEFSDEVLAQLDA.

It belongs to the TACO1 family.

It localises to the cytoplasm. The protein is Probable transcriptional regulatory protein A1S_1496 of Acinetobacter baumannii (strain ATCC 17978 / DSM 105126 / CIP 53.77 / LMG 1025 / NCDC KC755 / 5377).